An 885-amino-acid chain; its full sequence is Ankyrin repeat and SAM domain-containing protein 6 (885 aa).

ANK repeat units lie at residues 8–37, 68–97, 101–130, 134–163, 181–210, 215–244, 282–312, 316–345, 350–379, and 383–414; these read PGLQ…EPVA, AGNS…SVNS, YGWS…DVNA, LGAS…TVDH, LGIT…DPNH, VGWS…NPDH, KRRP…HVNL, DGAT…DMNK, HGWT…DVTL, and NGYT…QVNK. At asparagine 129 the chain carries 3-hydroxyasparagine. Disordered regions lie at residues 415–439, 491–522, 563–775, and 855–885; these read DRGG…SIPM, MRAP…PRRE, SSDR…ITDE, and FESS…SSRR. Over residues 608–640 the composition is skewed to low complexity; that stretch reads PSISRSPTSPASSGNFNHSPHSSGGASGVGSMS. Serine 650 carries the post-translational modification Phosphoserine. Over residues 650-662 the composition is skewed to polar residues; the sequence is SGGSVDSVLSQIA. Composition is skewed to low complexity over residues 689-713 and 722-739; these read GSSP…TSSS and PPSG…TLTP. Phosphoserine is present on residues serine 734 and serine 742. The segment covering 750-770 has biased composition (low complexity); the sequence is SSVSSSSSHRQSKSSGGSSSG. In terms of domain architecture, SAM spans 773-836; sequence TDEDELTGIL…LAAISELNAG (64 aa). Polar residues predominate over residues 855-865; it reads FESSASNTRAP. Basic and acidic residues predominate over residues 876-885; sequence RPEETVSSRR.

As to quaternary structure, homooligomer. Interacts with NEK8. Central component of a complex containing at least ANKS6, INVS, NEK8 and NPHP3. ANKS6 may organize complex assembly by linking INVS and NPHP3 to NEK8 and INVS may target the complex to the proximal ciliary axoneme. Interacts (via SAM domain) with BICC1 (via KH domains) in an RNA-dependent manner. Interacts (via SAM domain) with ANKS3 (via SAM domain). Hydroxylated at Asn-129, most probably by HIF1AN. This hydroxylation results in decreased NEK8-binding. As to expression, widely expressed with moderate level in brain, skeletal muscle and testis. Expressed in renal tubules.

The protein localises to the cell projection. Its subcellular location is the cilium. It localises to the cytoplasm. Its function is as follows. Required for renal function. The protein is Ankyrin repeat and SAM domain-containing protein 6 (Anks6) of Rattus norvegicus (Rat).